We begin with the raw amino-acid sequence, 483 residues long: Aspartyl/glutamyl-tRNA(Asn/Gln) amidotransferase subunit B (483 aa).

The protein belongs to the GatB/GatE family. GatB subfamily. Heterotrimer of A, B and C subunits.

The enzyme catalyses L-glutamyl-tRNA(Gln) + L-glutamine + ATP + H2O = L-glutaminyl-tRNA(Gln) + L-glutamate + ADP + phosphate + H(+). It catalyses the reaction L-aspartyl-tRNA(Asn) + L-glutamine + ATP + H2O = L-asparaginyl-tRNA(Asn) + L-glutamate + ADP + phosphate + 2 H(+). Its function is as follows. Allows the formation of correctly charged Asn-tRNA(Asn) or Gln-tRNA(Gln) through the transamidation of misacylated Asp-tRNA(Asn) or Glu-tRNA(Gln) in organisms which lack either or both of asparaginyl-tRNA or glutaminyl-tRNA synthetases. The reaction takes place in the presence of glutamine and ATP through an activated phospho-Asp-tRNA(Asn) or phospho-Glu-tRNA(Gln). This Rickettsia conorii (strain ATCC VR-613 / Malish 7) protein is Aspartyl/glutamyl-tRNA(Asn/Gln) amidotransferase subunit B.